The sequence spans 916 residues: DNA mismatch repair protein MutS (916 aa).

665 to 672 contacts ATP; it reads GPNMAGKS.

The protein belongs to the DNA mismatch repair MutS family.

This protein is involved in the repair of mismatches in DNA. It is possible that it carries out the mismatch recognition step. This protein has a weak ATPase activity. This chain is DNA mismatch repair protein MutS, found in Bradyrhizobium sp. (strain ORS 278).